Consider the following 342-residue polypeptide: tRNA-specific 2-thiouridylase MnmA (342 aa).

ATP-binding positions include 6-13 (LLSGGVDS) and L32. C92 serves as the catalytic Nucleophile. A disulfide bridge connects residues C92 and C191. ATP is bound at residue G116. Positions 138 to 140 (KDQ) are interaction with tRNA. The active-site Cysteine persulfide intermediate is C191. The interaction with tRNA stretch occupies residues 293 to 294 (RY).

The protein belongs to the MnmA/TRMU family.

It is found in the cytoplasm. The catalysed reaction is S-sulfanyl-L-cysteinyl-[protein] + uridine(34) in tRNA + AH2 + ATP = 2-thiouridine(34) in tRNA + L-cysteinyl-[protein] + A + AMP + diphosphate + H(+). Its function is as follows. Catalyzes the 2-thiolation of uridine at the wobble position (U34) of tRNA, leading to the formation of s(2)U34. The sequence is that of tRNA-specific 2-thiouridylase MnmA from Helicobacter acinonychis (strain Sheeba).